The following is a 132-amino-acid chain: Fatty acid-binding protein 12 (132 aa).

A fatty acid is bound by residues Arg-107 and Arg-127–Tyr-129.

Belongs to the calycin superfamily. Fatty-acid binding protein (FABP) family. As to expression, highly expressed in adult retina and testis.

Its function is as follows. May play a role in lipid transport. The sequence is that of Fatty acid-binding protein 12 (Fabp12) from Mus musculus (Mouse).